The sequence spans 255 residues: Pyrroloquinoline-quinone synthase (255 aa).

Belongs to the PqqC family.

It catalyses the reaction 6-(2-amino-2-carboxyethyl)-7,8-dioxo-1,2,3,4,7,8-hexahydroquinoline-2,4-dicarboxylate + 3 O2 = pyrroloquinoline quinone + 2 H2O2 + 2 H2O + H(+). It functions in the pathway cofactor biosynthesis; pyrroloquinoline quinone biosynthesis. In terms of biological role, ring cyclization and eight-electron oxidation of 3a-(2-amino-2-carboxyethyl)-4,5-dioxo-4,5,6,7,8,9-hexahydroquinoline-7,9-dicarboxylic-acid to PQQ. This is Pyrroloquinoline-quinone synthase from Granulibacter bethesdensis (strain ATCC BAA-1260 / CGDNIH1).